A 459-amino-acid chain; its full sequence is Protein U54 (459 aa).

An N-terminal signal peptide occupies residues 1–20; that stretch reads MQPATLQWSSYVLQLRLTTA. Residues Asn76, Asn100, Asn281, Asn321, and Asn452 are each glycosylated (N-linked (GlcNAc...) asparagine; by host).

It belongs to the herpesviridae UL82 family.

The polypeptide is Protein U54 (U54) (Homo sapiens (Human)).